The chain runs to 169 residues: NADH-quinone oxidoreductase subunit I (169 aa).

4Fe-4S ferredoxin-type domains follow at residues 61-90 (RRYD…IESE) and 100-129 (TRYD…ETHI). Residues Cys-70, Cys-73, Cys-76, Cys-80, Cys-109, Cys-112, Cys-115, and Cys-119 each contribute to the [4Fe-4S] cluster site.

It belongs to the complex I 23 kDa subunit family. As to quaternary structure, NDH-1 is composed of 14 different subunits. Subunits NuoA, H, J, K, L, M, N constitute the membrane sector of the complex. Requires [4Fe-4S] cluster as cofactor.

It localises to the cell inner membrane. The catalysed reaction is a quinone + NADH + 5 H(+)(in) = a quinol + NAD(+) + 4 H(+)(out). In terms of biological role, NDH-1 shuttles electrons from NADH, via FMN and iron-sulfur (Fe-S) centers, to quinones in the respiratory chain. The immediate electron acceptor for the enzyme in this species is believed to be ubiquinone. Couples the redox reaction to proton translocation (for every two electrons transferred, four hydrogen ions are translocated across the cytoplasmic membrane), and thus conserves the redox energy in a proton gradient. The sequence is that of NADH-quinone oxidoreductase subunit I from Verminephrobacter eiseniae (strain EF01-2).